The sequence spans 239 residues: Proteasome subunit beta type-6 (239 aa).

Ala-2 is modified (N-acetylalanine). The propeptide at 2-34 is removed in mature form; the sequence is AATLVAARGTRPAPAWGPEAIAPDWENREVSTG. The Nucleophile role is filled by Thr-35. Thr-69 is modified (phosphothreonine).

It belongs to the peptidase T1B family. In terms of assembly, the 26S proteasome consists of a 20S proteasome core and two 19S regulatory subunits. The 20S proteasome core is a barrel-shaped complex made of 28 subunits that are arranged in four stacked rings. The two outer rings are each formed by seven alpha subunits, and the two inner rings are formed by seven beta subunits. The proteolytic activity is exerted by three beta-subunits PSMB5, PSMB6 and PSMB7.

The protein localises to the cytoplasm. It is found in the nucleus. The enzyme catalyses Cleavage of peptide bonds with very broad specificity.. Component of the 20S core proteasome complex involved in the proteolytic degradation of most intracellular proteins. This complex plays numerous essential roles within the cell by associating with different regulatory particles. Associated with two 19S regulatory particles, forms the 26S proteasome and thus participates in the ATP-dependent degradation of ubiquitinated proteins. The 26S proteasome plays a key role in the maintenance of protein homeostasis by removing misfolded or damaged proteins that could impair cellular functions, and by removing proteins whose functions are no longer required. Associated with the PA200 or PA28, the 20S proteasome mediates ubiquitin-independent protein degradation. This type of proteolysis is required in several pathways including spermatogenesis (20S-PA200 complex) or generation of a subset of MHC class I-presented antigenic peptides (20S-PA28 complex). Within the 20S core complex, PSMB6 displays a peptidylglutamyl-hydrolyzing activity also termed postacidic or caspase-like activity, meaning that the peptides bond hydrolysis occurs directly after acidic residues. The sequence is that of Proteasome subunit beta type-6 (PSMB6) from Bos taurus (Bovine).